The chain runs to 545 residues: MLSVRVAAALARALPRQSGLVSKKALGAAFVATRNIHASGVWPPEKSGTAEVSSILEERILGADTTADLEETGRVLSIGDGIARVYGLRNVQAEEMVEFSSGLKGMSLNLEPDNVGVVGLANDKLIKEGDIVKRTGAIVDVPVGDELLGRVVDALGNTIDGKGPIGSKTRRRVGLKAPGIIPRISVREPMQTGIKAVDSLVPIGRGQRELIIGDRQTGKTSIAIDTIINQKRFNDGTDEKKKLYCIYVAIGQKRLTDADAMKYTIVVSRTASDAAPLQYLAPYSGCSMGEYFRDNGTHALIIYDDLSKQAVAYRQMSLLLRRPPGREAYPGDVFYLHSRLLERAAKMNDHFGGGSLTALPVIETQAGDVSAYIPTNVISITDGQIFLETELFYKGIRPAINVGLSVSRVGSAAQTRAMKQVAGTMKLELAQYREVAAFAQFGSDLDAATQQLLNRGVRLTELLKQGQYVPMAIEEQVTVIYAGVRGHLDKMEPSKITKFESAFLAHVKSQHQELLATIRADGKISEQADAKLKEIVLNFLSTFEA.

Gln-216, Gly-218, Lys-219, Thr-220, and Ser-221 together coordinate ATP. Residue Thr-220 coordinates Mg(2+). Asp-304 contacts Mg(2+). 2 residues coordinate ATP: Gln-465 and Gln-467.

This sequence belongs to the ATPase alpha/beta chains family. In terms of assembly, homotrimer. Component of the ATP synthase complex composed at least of ATP5F1A/subunit alpha, ATP5F1B/subunit beta, ATP5MC1/subunit c (homooctomer), MT-ATP6/subunit a, MT-ATP8/subunit 8, ATP5ME/subunit e, ATP5MF/subunit f, ATP5MG/subunit g, ATP5MK/subunit k, ATP5MJ/subunit j, ATP5F1C/subunit gamma, ATP5F1D/subunit delta, ATP5F1E/subunit epsilon, ATP5PF/subunit F6, ATP5PB/subunit b, ATP5PD/subunit d, ATP5PO/subunit OSCP. ATP synthase complex consists of a soluble F(1) head domain (subunits alpha(3) and beta(3)) - the catalytic core - and a membrane F(0) domain - the membrane proton channel (subunits c, a, 8, e, f, g, k and j). These two domains are linked by a central stalk (subunits gamma, delta, and epsilon) rotating inside the F1 region and a stationary peripheral stalk (subunits F6, b, d, and OSCP).

The protein resides in the mitochondrion inner membrane. Functionally, subunit alpha, of the mitochondrial membrane ATP synthase complex (F(1)F(0) ATP synthase or Complex V) that produces ATP from ADP in the presence of a proton gradient across the membrane which is generated by electron transport complexes of the respiratory chain. ATP synthase complex consist of a soluble F(1) head domain - the catalytic core - and a membrane F(1) domain - the membrane proton channel. These two domains are linked by a central stalk rotating inside the F(1) region and a stationary peripheral stalk. During catalysis, ATP synthesis in the catalytic domain of F(1) is coupled via a rotary mechanism of the central stalk subunits to proton translocation. In vivo, can only synthesize ATP although its ATP hydrolase activity can be activated artificially in vitro. With the catalytic subunit beta (ATP5F1B), forms the catalytic core in the F(1) domain. Subunit alpha does not bear the catalytic high-affinity ATP-binding sites. The sequence is that of ATP synthase F(1) complex subunit alpha, mitochondrial from Xenopus laevis (African clawed frog).